The primary structure comprises 451 residues: Protein SAR DEFICIENT 1 (451 aa).

A DNA-binding region spans residues 149 to 270 (DKWTSDEFES…AFHKKLSSRH (122 aa)).

The protein belongs to the plant ACBP60 protein family. (Microbial infection) Interacts with V.dahliae SCP41.

Its subcellular location is the nucleus. Transcription activator that binds DNA in a sequence-specific manner, 5'-GAAATTTTGG-3', to promote the expression of target genes. Recruited to the promoter of ICS1 and other defense-related genes (e.g. PR1 and SID2) in response to both biotic (e.g. Pseudomonas syringae pv. maculicola ES4326) and abiotic stresses (e.g. UV-B), thus triggering slow defense responses by stimulating salicylic acid (SA) biosynthesis. Required for basal and systemic acquired resistance to P.syringae pv. maculicola and Hyaloperonospora arabidopsidis. This Arabidopsis thaliana (Mouse-ear cress) protein is Protein SAR DEFICIENT 1.